The sequence spans 443 residues: Frizzled/smoothened-like sans CRD protein E (443 aa).

The first 23 residues, methionine 1–serine 23, serve as a signal peptide directing secretion. Residues asparagine 24–lysine 83 are Extracellular-facing. Residue asparagine 47 is glycosylated (N-linked (GlcNAc...) asparagine). Residues valine 84–isoleucine 104 traverse the membrane as a helical segment. Residues threonine 105–threonine 120 lie on the Cytoplasmic side of the membrane. A helical membrane pass occupies residues valine 121 to leucine 141. Over tryptophan 142–cysteine 166 the chain is Extracellular. Residues leucine 167–isoleucine 187 form a helical membrane-spanning segment. Topologically, residues serine 188–lysine 203 are cytoplasmic. Residues leucine 204–valine 224 form a helical membrane-spanning segment. The Extracellular portion of the chain corresponds to glycine 225–glycine 248. Residues tyrosine 249–leucine 269 traverse the membrane as a helical segment. The Cytoplasmic segment spans residues lysine 270–lysine 289. The chain crosses the membrane as a helical span at residues proline 290–tyrosine 310. The Extracellular portion of the chain corresponds to threonine 311–histidine 350. Residues phenylalanine 351–threonine 371 traverse the membrane as a helical segment. At arginine 372–proline 443 the chain is on the cytoplasmic side. Composition is skewed to low complexity over residues serine 397–serine 410 and glutamate 419–glutamate 432. The segment at serine 397–proline 443 is disordered.

The protein belongs to the G-protein coupled receptor Fz/Smo family.

It localises to the membrane. The protein is Frizzled/smoothened-like sans CRD protein E (fscE) of Dictyostelium discoideum (Social amoeba).